The sequence spans 455 residues: MRNCCRERGFSVGRLEPETSFSCASDVKSSPDMDSVSSQDSLYLPNSIGASLEDQNLWTQFHQEGTEMIITKSGRRMFPQCKIRLFGLHPYTKYMLLVDFVPLDNFRYKWNKNQWEAAGKAEPHPPCRTYVHPDSPASGAHWMKDPICFQKLKLTNNTLDQQGHIILHSMHRYKPRFHVVQSDDMYNSPWGLVQVFSFPETEFTAVTAYQNEKITKLKINHNPFAKGFREQERSHKRDDVLKTLQQSPSKSQKRKKWEDSPEADISDFPKATRIKEESIMDPAGVYQNWVSDHEANQGLTPHSPESEGVNQEQQVPTSSSNFYIKSQYRRSSQHLSSPYDLGEPSSRRLTPDVATVPDSDPDSLAVLHVIPTQNSAQERTCSMNFSMETPMKQPLRGAIYSPYGTEQWMVPAQGPYQPVSYTAYPTDLSAQGAVAHPHSGMSDWSQYSLFPYSCW.

The T-box DNA-binding region spans 57–230 (LWTQFHQEGT…HNPFAKGFRE (174 aa)). Positions 229 to 241 (REQERSHKRDDVL) are enriched in basic and acidic residues. Disordered regions lie at residues 229-276 (REQE…RIKE) and 295-350 (ANQG…RRLT). The span at 308-326 (GVNQEQQVPTSSSNFYIKS) shows a compositional bias: polar residues.

In terms of assembly, forms a repression complex on the promoters of the nodal/nr1 and siamois genes with the maternal factors tcf7l1/tcf3 and pouf5.1/oct-25. Interacts (via C-terminus) with tcf7l1/tcf3 (via N-terminus). Also interacts with the other POU-domain transcription factors pou5f1.2/oct-91 and pou5f1.3/oct-60. As to expression, maternally localized to the vegetal hemisphere of oocytes. Zygotic expression parallels blastopore formation and shifts from dorsal expression in the marginal zone of late blastula and early gastrula stages to a ventral/lateral expression at later stages. During neurula and tailbud stages, expressed in the posterior and anterior ends of the embryo. During tailbud stages, expressed in a subset of interneurons in the neural tube.

The protein localises to the nucleus. Its function is as follows. Transcription factor required for both mesoderm and endoderm formation in the embryo; signaling determinants and concentration levels may determine which germ layer is formed. Acts together with beta-catenin to activate genes that are responsible for mesoderm induction including wnt-8, eomes t/bra, siamois, mix1 and sox17. Directly binds to promoter DNA. Patterns the mesoderm along the dorsoventral and posterior axis. Activates siamois gene transcription when alone or in combination with beta-catenin, but inhibits siamois transcription in combination with pou5f1.1/oct-25. This Xenopus laevis (African clawed frog) protein is T-box protein VegT-B (vegt-b).